Here is a 143-residue protein sequence, read N- to C-terminus: Fluoride-specific ion channel FluC (143 aa).

Transmembrane regions (helical) follow at residues 3–23 (AVVW…GSGL), 41–61 (WGTL…LIWL), 76–96 (IVGL…CLVF), and 103–123 (LMVG…VFLG). Na(+)-binding residues include Gly81 and Thr84.

The protein belongs to the fluoride channel Fluc/FEX (TC 1.A.43) family.

It is found in the cell inner membrane. The enzyme catalyses fluoride(in) = fluoride(out). Na(+) is not transported, but it plays an essential structural role and its presence is essential for fluoride channel function. Functionally, fluoride-specific ion channel. Important for reducing fluoride concentration in the cell, thus reducing its toxicity. This Xylella fastidiosa (strain 9a5c) protein is Fluoride-specific ion channel FluC.